Here is a 72-residue protein sequence, read N- to C-terminus: Translation initiation factor IF-1 (72 aa).

Residues 1–72 (MTKEENIEMQ…SKGRIIFRSR (72 aa)) form the S1-like domain.

Belongs to the IF-1 family. Component of the 30S ribosomal translation pre-initiation complex which assembles on the 30S ribosome in the order IF-2 and IF-3, IF-1 and N-formylmethionyl-tRNA(fMet); mRNA recruitment can occur at any time during PIC assembly.

The protein resides in the cytoplasm. Its function is as follows. One of the essential components for the initiation of protein synthesis. Stabilizes the binding of IF-2 and IF-3 on the 30S subunit to which N-formylmethionyl-tRNA(fMet) subsequently binds. Helps modulate mRNA selection, yielding the 30S pre-initiation complex (PIC). Upon addition of the 50S ribosomal subunit IF-1, IF-2 and IF-3 are released leaving the mature 70S translation initiation complex. In Wigglesworthia glossinidia brevipalpis, this protein is Translation initiation factor IF-1.